Here is a 392-residue protein sequence, read N- to C-terminus: Protein RecA (392 aa).

A disordered region spans residues 1–21 (MALETKPAQDPATEIKHELDP). ATP is bound at residue 83–90 (GPESSGKT). The tract at residues 372–392 (DAAKDTKATAAPAAKSSRAKA) is disordered. A compositionally biased stretch (low complexity) spans 379-392 (ATAAPAAKSSRAKA).

The protein belongs to the RecA family.

Its subcellular location is the cytoplasm. Can catalyze the hydrolysis of ATP in the presence of single-stranded DNA, the ATP-dependent uptake of single-stranded DNA by duplex DNA, and the ATP-dependent hybridization of homologous single-stranded DNAs. It interacts with LexA causing its activation and leading to its autocatalytic cleavage. The sequence is that of Protein RecA from Bifidobacterium breve.